We begin with the raw amino-acid sequence, 265 residues long: Cytochrome c oxidase subunit 3 (265 aa).

A run of 6 helical transmembrane segments spans residues 16–36 (PWPI…VMYM), 41–61 (GGAT…FVWW), 84–104 (YGSI…FWAS), 162–182 (AVYA…FQGM), 200–220 (FFLA…FLIV), and 245–265 (WHFV…WGGI).

Belongs to the cytochrome c oxidase subunit 3 family. As to quaternary structure, component of the cytochrome c oxidase (complex IV, CIV), a multisubunit enzyme composed of a catalytic core of 3 subunits and several supernumerary subunits. The complex exists as a monomer or a dimer and forms supercomplexes (SCs) in the inner mitochondrial membrane with ubiquinol-cytochrome c oxidoreductase (cytochrome b-c1 complex, complex III, CIII).

It localises to the mitochondrion inner membrane. The catalysed reaction is 4 Fe(II)-[cytochrome c] + O2 + 8 H(+)(in) = 4 Fe(III)-[cytochrome c] + 2 H2O + 4 H(+)(out). In terms of biological role, component of the cytochrome c oxidase, the last enzyme in the mitochondrial electron transport chain which drives oxidative phosphorylation. The respiratory chain contains 3 multisubunit complexes succinate dehydrogenase (complex II, CII), ubiquinol-cytochrome c oxidoreductase (cytochrome b-c1 complex, complex III, CIII) and cytochrome c oxidase (complex IV, CIV), that cooperate to transfer electrons derived from NADH and succinate to molecular oxygen, creating an electrochemical gradient over the inner membrane that drives transmembrane transport and the ATP synthase. Cytochrome c oxidase is the component of the respiratory chain that catalyzes the reduction of oxygen to water. Electrons originating from reduced cytochrome c in the intermembrane space (IMS) are transferred via the dinuclear copper A center (CU(A)) of subunit 2 and heme A of subunit 1 to the active site in subunit 1, a binuclear center (BNC) formed by heme A3 and copper B (CU(B)). The BNC reduces molecular oxygen to 2 water molecules using 4 electrons from cytochrome c in the IMS and 4 protons from the mitochondrial matrix. In Aegilops columnaris (Goatgrass), this protein is Cytochrome c oxidase subunit 3 (COX3).